A 461-amino-acid chain; its full sequence is LL-diaminopimelate aminotransferase, chloroplastic (461 aa).

A chloroplast-targeting transit peptide spans Met1–Cys45. Residues Tyr72 and Gly99 each contribute to the substrate site. Pyridoxal 5'-phosphate contacts are provided by residues Tyr129, Ala163–Lys164, Tyr187, Asn244, Tyr275, and Ser302–Ser304. Positions 164, 187, and 244 each coordinate substrate. At Lys305 the chain carries N6-(pyridoxal phosphate)lysine. Pyridoxal 5'-phosphate-binding residues include Arg313 and Asn344. Substrate is bound by residues Asn344 and Arg439.

The protein belongs to the class-I pyridoxal-phosphate-dependent aminotransferase family. LL-diaminopimelate aminotransferase subfamily. In terms of assembly, homodimer. Pyridoxal 5'-phosphate is required as a cofactor. In terms of tissue distribution, highly expressed in seedlings, roots, stems, flowers and leaves. Lower expression in siliques.

The protein resides in the plastid. Its subcellular location is the chloroplast. It carries out the reaction (2S,6S)-2,6-diaminopimelate + 2-oxoglutarate = (S)-2,3,4,5-tetrahydrodipicolinate + L-glutamate + H2O + H(+). It participates in amino-acid biosynthesis; L-lysine biosynthesis via DAP pathway; LL-2,6-diaminopimelate from (S)-tetrahydrodipicolinate (aminotransferase route): step 1/1. Functionally, required for lysine biosynthesis. Catalyzes the direct conversion of tetrahydrodipicolinate to LL-diaminopimelate, a reaction that requires three enzymes in E.coli. Not active with meso-diaminopimelate, lysine or ornithine as substrates. This is LL-diaminopimelate aminotransferase, chloroplastic (DAP) from Arabidopsis thaliana (Mouse-ear cress).